A 509-amino-acid polypeptide reads, in one-letter code: MQQDYCPDIAKLAEGGFNKVFILRAKNGREVIARIPTPIAGPAHYTTASEVATMDFLRAVLKLPVPEVFAYSTTSENPVGAEYILMERVEGESLSSRWLSLTTDEVKDIMIQIAEMERKIFDFRFPAYGSLYHKKDLDWKHQIPIVEDFVIGPVSSREFWHGERSKTEIDRGPCRVSPLSTFPFILGFLEKEPTGTGLIIAVGLSPLDCVTSAARREMAVIQRHAKPQPRQTFLLPTNYNIHPSEHTSLLSQFLQVAPHLIRPGSYSAPTLRHPDLSLSNILLAPGTSKIISIIDWQGATILPRFMQAGYPAFCHHDSSQPQSLEIPSLPDDFDKMGIDEQRQIKAIFRLEEANLYYTAATGVHNEEHMNVLKIPHLGMQQYLLRQTGYPWDADVINLRAALVGITTPSVWSKISSAACPVEFSEEEREAAIAESQEWNESEQLLSRVREHLNIDLEGGTEPDNFERAVEGNRQLRIEMVRQAEAGQQEICWRNWPYKDQEDNSMPPQR.

In terms of biological role, part of the subtelomeric hrmA-associated cluster (HAC) containing genes that alter the hyphal surface (such as reduced total chitin or increased beta-glucan exposure) and perturb inter-hyphal interactions within the developing biofilms, resulting in a loss of vertically aligned polarized growing filaments. Consequently, this hypoxia-typic morphotype (called H-MORPH) with altered biofilm architecture leads to increased hypoxia fitness, increased host inflammation, rapid disease progression, and mortality in a murine model of invasive aspergillosis. This Aspergillus fumigatus (strain CBS 144.89 / FGSC A1163 / CEA10) (Neosartorya fumigata) protein is Subtelomeric hrmA-associated cluster protein AFUB_078990.